Here is an 87-residue protein sequence, read N- to C-terminus: MAHKKAGGSSRNGRDSESKRLGVKVYGGQAINAGGIIVRQRGTRMHAGENVGMGKDHTLFALVDGHVKFATKGADKKHTVIVVPAAA.

A disordered region spans residues 1-21 (MAHKKAGGSSRNGRDSESKRL).

It belongs to the bacterial ribosomal protein bL27 family.

The protein is Large ribosomal subunit protein bL27 of Burkholderia multivorans (strain ATCC 17616 / 249).